Reading from the N-terminus, the 1299-residue chain is DNA-directed RNA polymerase subunit beta' (1299 aa).

Positions 60, 62, 75, and 78 each coordinate Zn(2+). Residues 385 to 405 (GRRGRPVTGPGNRPLKSLSDM) are disordered. Residues aspartate 535, aspartate 537, and aspartate 539 each contribute to the Mg(2+) site. Residues cysteine 886, cysteine 962, cysteine 969, and cysteine 972 each coordinate Zn(2+).

The protein belongs to the RNA polymerase beta' chain family. As to quaternary structure, the RNAP catalytic core consists of 2 alpha, 1 beta, 1 beta' and 1 omega subunit. When a sigma factor is associated with the core the holoenzyme is formed, which can initiate transcription. Requires Mg(2+) as cofactor. It depends on Zn(2+) as a cofactor.

The enzyme catalyses RNA(n) + a ribonucleoside 5'-triphosphate = RNA(n+1) + diphosphate. DNA-dependent RNA polymerase catalyzes the transcription of DNA into RNA using the four ribonucleoside triphosphates as substrates. The chain is DNA-directed RNA polymerase subunit beta' from Streptomyces avermitilis (strain ATCC 31267 / DSM 46492 / JCM 5070 / NBRC 14893 / NCIMB 12804 / NRRL 8165 / MA-4680).